Consider the following 149-residue polypeptide: Large ribosomal subunit protein bL20m (149 aa).

Residues 1–9 (MVFLTAQLW) constitute a mitochondrion transit peptide.

This sequence belongs to the bacterial ribosomal protein bL20 family. In terms of assembly, component of the mitochondrial large ribosomal subunit (mt-LSU). Mature mammalian 55S mitochondrial ribosomes consist of a small (28S) and a large (39S) subunit. The 28S small subunit contains a 12S ribosomal RNA (12S mt-rRNA) and 30 different proteins. The 39S large subunit contains a 16S rRNA (16S mt-rRNA), a copy of mitochondrial valine transfer RNA (mt-tRNA(Val)), which plays an integral structural role, and 52 different proteins. Interacts with OXA1L.

Its subcellular location is the mitochondrion. The protein is Large ribosomal subunit protein bL20m (MRPL20) of Homo sapiens (Human).